A 406-amino-acid polypeptide reads, in one-letter code: (R)-benzylsuccinyl-CoA dehydrogenase (406 aa).

It belongs to the acyl-CoA dehydrogenase family. Homotetramer. Requires FAD as cofactor.

The catalysed reaction is (R)-2-benzylsuccinyl-CoA + oxidized [electron-transfer flavoprotein] + H(+) = (E)-2-benzylidenesuccinyl-CoA + reduced [electron-transfer flavoprotein]. It participates in xenobiotic degradation; toluene degradation. Inhibited by (S)-benzylsuccinyl-CoA. Its function is as follows. Catalyzes the oxidation of benzylsuccinyl-CoA to benzylidenesuccinyl-CoA. The sequence is that of (R)-benzylsuccinyl-CoA dehydrogenase (bbsG) from Thauera aromatica.